A 250-amino-acid polypeptide reads, in one-letter code: MATFFISDLHLGTGKTEIQLRAIEFLSQEAPYGDALYILGDLFDYWIGDDAPTAEGLAIITALRRLADVGVTLHFLSGNRDFLVGQVFSQASGCQILSDPAIIDLYGVPTLLMHGDTLCTDDVAYQRARARLRRPAILRTYLALPKSWRRAVAQRLRRQSQAHVQHQPLTIMDVNQTAVETALRIHGVKQLIHGHTHRPAVHHFTVDGHPRQRIVLGDWDRGKSALSCTPEGFHFSDSRILEPRFGNLQG.

Residues aspartate 8, histidine 10, aspartate 41, asparagine 79, and histidine 114 each contribute to the Mn(2+) site. 79 to 80 (NR) lines the substrate pocket. Substrate is bound by residues aspartate 122, serine 160, glutamine 167, and histidine 195. Mn(2+)-binding residues include histidine 195 and histidine 197.

It belongs to the LpxH family. Requires Mn(2+) as cofactor.

The protein resides in the cell inner membrane. It carries out the reaction UDP-2-N,3-O-bis[(3R)-3-hydroxytetradecanoyl]-alpha-D-glucosamine + H2O = 2-N,3-O-bis[(3R)-3-hydroxytetradecanoyl]-alpha-D-glucosaminyl 1-phosphate + UMP + 2 H(+). It participates in glycolipid biosynthesis; lipid IV(A) biosynthesis; lipid IV(A) from (3R)-3-hydroxytetradecanoyl-[acyl-carrier-protein] and UDP-N-acetyl-alpha-D-glucosamine: step 4/6. Functionally, hydrolyzes the pyrophosphate bond of UDP-2,3-diacylglucosamine to yield 2,3-diacylglucosamine 1-phosphate (lipid X) and UMP by catalyzing the attack of water at the alpha-P atom. Involved in the biosynthesis of lipid A, a phosphorylated glycolipid that anchors the lipopolysaccharide to the outer membrane of the cell. The protein is UDP-2,3-diacylglucosamine hydrolase of Nitrosococcus oceani (strain ATCC 19707 / BCRC 17464 / JCM 30415 / NCIMB 11848 / C-107).